The sequence spans 30 residues: GWKDWAKKAGGWLKKKGPGMAKAALKAAMQ.

In terms of tissue distribution, expressed by the venom gland.

It is found in the secreted. Its function is as follows. Shows a broad spectrum of activity against both Gram-positive and Gram-negative bacteria. Also has antimicrobial activity against S.cerevisiae. Has insecticidal and non-hemolytic activity. The sequence is that of M-poneritoxin-Ng3a from Neoponera goeldii (Ponerine ant).